The following is a 509-amino-acid chain: 3-isopropylmalate dehydratase large subunit, chloroplastic (509 aa).

A compositionally biased stretch (low complexity) spans 1 to 24 (MASVISSSPFLCKSSSKSDLGISS). The segment at 1–25 (MASVISSSPFLCKSSSKSDLGISSF) is disordered. Residues 1–47 (MASVISSSPFLCKSSSKSDLGISSFPKSSQISIHRCQKKSISRKIVS) constitute a chloroplast transit peptide. Residues Cys376, Cys445, and Cys448 each coordinate [4Fe-4S] cluster.

This sequence belongs to the aconitase/IPM isomerase family. Heterodimer of the large LEUC/IIL1 subunit and the small LEUD (SSU1, SSU2 or SSU3) subunits. [4Fe-4S] cluster serves as cofactor. Expressed in roots, leaves, stems and flowers. Expressed at low levels in siliques.

Its subcellular location is the plastid. It localises to the chloroplast stroma. The enzyme catalyses (2R,3S)-3-isopropylmalate = (2S)-2-isopropylmalate. It carries out the reaction a 2-(omega-methylsulfanyl)alkylmalate = a 2-(omega-methylsulfanyl)alkylmaleate + H2O. The catalysed reaction is 2-(3-methylsulfanyl)propylmalate = 2-(2-methylsulfanyl)propylmaleate + H2O. It catalyses the reaction a 3-(omega-methylsulfanyl)alkylmalate = a 2-(omega-methylsulfanyl)alkylmaleate + H2O. The enzyme catalyses 2-(2-methylsulfanyl)ethylmalate = 2-(2-methylsulfanyl)ethylmaleate + H2O. It carries out the reaction 3-(2-methylsulfanyl)ethylmalate = 2-(2-methylsulfanyl)ethylmaleate + H2O. The catalysed reaction is 3-(3-methylsulfanyl)propylmalate = 2-(2-methylsulfanyl)propylmaleate + H2O. Its pathway is amino-acid biosynthesis; L-leucine biosynthesis; L-leucine from 3-methyl-2-oxobutanoate: step 2/4. In terms of biological role, catalyzes the isomerization between 2-isopropylmalate and 3-isopropylmalate, via the formation of 2-isopropylmaleate. Functions in both the biosynthesis of leucine and in the methionine chain elongation pathway of aliphatic glucosinolate formation. The chain is 3-isopropylmalate dehydratase large subunit, chloroplastic from Arabidopsis thaliana (Mouse-ear cress).